The primary structure comprises 554 residues: 3-(3-hydroxy-phenyl)propionate/3-hydroxycinnamic acid hydroxylase (554 aa).

Residues 17-46 (QVAIAGAGPVGLMMANYLGQMGIDVLVVEK) and 285-295 (FRIDRVLLAGD) each bind FAD.

It belongs to the PheA/TfdB FAD monooxygenase family. FAD is required as a cofactor.

It carries out the reaction 3-(3-hydroxyphenyl)propanoate + NADH + O2 + H(+) = 3-(2,3-dihydroxyphenyl)propanoate + NAD(+) + H2O. It catalyses the reaction (2E)-3-(3-hydroxyphenyl)prop-2-enoate + NADH + O2 + H(+) = (2E)-3-(2,3-dihydroxyphenyl)prop-2-enoate + NAD(+) + H2O. It participates in aromatic compound metabolism; 3-phenylpropanoate degradation. In terms of biological role, catalyzes the insertion of one atom of molecular oxygen into position 2 of the phenyl ring of 3-(3-hydroxyphenyl)propionate (3-HPP) and hydroxycinnamic acid (3HCI). This chain is 3-(3-hydroxy-phenyl)propionate/3-hydroxycinnamic acid hydroxylase, found in Escherichia coli (strain K12 / DH10B).